The primary structure comprises 1176 residues: Chromosome partition protein Smc (1176 aa).

Pro32 to Asn39 contacts ATP. Residues Gly169–Gln506 are a coiled coil. Residues Leu521–Ala623 form the SMC hinge domain. Coiled coils occupy residues Asp653–Met947 and Glu987–Thr1024.

It belongs to the SMC family. Homodimer.

Its subcellular location is the cytoplasm. Required for chromosome condensation and partitioning. This Bordetella petrii (strain ATCC BAA-461 / DSM 12804 / CCUG 43448) protein is Chromosome partition protein Smc.